A 397-amino-acid polypeptide reads, in one-letter code: N(6)-adenosine-methyltransferase non-catalytic subunit METTL14 (397 aa).

2 disordered regions span residues 37–67 (NAED…KKTP) and 368–397 (ELLR…GRPR). Residues 40–51 (DINSSRQLNSGG) show a composition bias toward polar residues. Residues 382–397 (LRGRGRGFPRGRGRPR) show a composition bias toward basic residues.

This sequence belongs to the MT-A70-like family. Component of the WMM complex, a N6-methyltransferase complex composed of a catalytic subcomplex, named MAC, and of an associated subcomplex, named MACOM. The MAC subcomplex is composed of Ime4/Mettl3 and Mettl14. The MACOM subcomplex is composed of fl(2)d, Flacc/Xio, Hakai, vir, and, in some cases of nito.

It localises to the nucleus. Its function is as follows. Non-catalytic component of the WMM complex, a complex that mediates N6-methyladenosine (m6A) methylation of mRNAs, a modification that plays a role in the efficiency of mRNA splicing and is required for sex determination. In the heterodimer formed with Ime4/Mettl3, Mettl14 constitutes the RNA-binding scaffold that recognizes the substrate rather than the catalytic core. Required for sex determination and dosage compensation via Sxl alternative splicing: m6A methylation acts as a key regulator of Sxl pre-mRNA and promotes female-specific alternative splicing of Sxl, which determines female physiognomy. M6A methylation is also required for neuronal functions. The polypeptide is N(6)-adenosine-methyltransferase non-catalytic subunit METTL14 (Drosophila melanogaster (Fruit fly)).